The following is a 422-amino-acid chain: UDP-N-acetylglucosamine 1-carboxyvinyltransferase (422 aa).

Residue 22-23 (KN) participates in phosphoenolpyruvate binding. R93 contacts UDP-N-acetyl-alpha-D-glucosamine. C117 (proton donor) is an active-site residue. A 2-(S-cysteinyl)pyruvic acid O-phosphothioketal modification is found at C117. UDP-N-acetyl-alpha-D-glucosamine-binding positions include 122–126 (RPVDL), D308, and L330.

Belongs to the EPSP synthase family. MurA subfamily.

The protein localises to the cytoplasm. The enzyme catalyses phosphoenolpyruvate + UDP-N-acetyl-alpha-D-glucosamine = UDP-N-acetyl-3-O-(1-carboxyvinyl)-alpha-D-glucosamine + phosphate. It functions in the pathway cell wall biogenesis; peptidoglycan biosynthesis. Cell wall formation. Adds enolpyruvyl to UDP-N-acetylglucosamine. This is UDP-N-acetylglucosamine 1-carboxyvinyltransferase from Helicobacter pylori (strain J99 / ATCC 700824) (Campylobacter pylori J99).